Consider the following 1091-residue polypeptide: ATP-dependent RNA helicase ddx54 (1091 aa).

Disordered stretches follow at residues 1-63 (MVKP…KEEF) and 150-231 (DNSN…KTGG). Basic and acidic residues predominate over residues 26 to 35 (MKGKKLETKS). Positions 150–161 (DNSNFDNNGDQF) are enriched in polar residues. Residues 196–207 (KKEEIESSEKFE) show a composition bias toward basic and acidic residues. A Q motif motif is present at residues 230-258 (GGFQSMDLTKNLLKAILKKGFNVPTPIQR). The 173-residue stretch at 261 to 433 (IPMILDGHDI…RAGLNNPKLI (173 aa)) folds into the Helicase ATP-binding domain. 274 to 281 (ARTGSGKT) provides a ligand contact to ATP. Residues 381 to 384 (DEAD) carry the DEAD box motif. The 155-residue stretch at 478–632 (TETTTTTTTN…KFQYEGQTIN (155 aa)) folds into the Helicase C-terminal domain. 2 disordered regions span residues 801–896 (EEML…TPEN) and 933–1091 (KRKG…KSRK). Basic and acidic residues predominate over residues 814–823 (DNNKDIKMNE). The span at 824–855 (NDDENDDDDEEGENDDDEEEENEKDEDDEEDE) shows a compositional bias: acidic residues. Composition is skewed to basic and acidic residues over residues 865–874 (ESSDKNDNNK), 944–975 (DADR…EEWK), and 1008–1019 (QGREKEKKDNKA). Basic residues predominate over residues 1020–1029 (SHAKGSHGLK). Residues 1031–1052 (RPSELKDKNQISKNRSEKERKM) show a composition bias toward basic and acidic residues. Gly residues predominate over residues 1068 to 1079 (SGGGGGGKGSKF).

This sequence belongs to the DEAD box helicase family. DDX54/DBP10 subfamily.

It is found in the nucleus. The protein localises to the nucleolus. The enzyme catalyses ATP + H2O = ADP + phosphate + H(+). Functionally, ATP-binding RNA helicase which may be involved in the ribosome biogenesis. This Dictyostelium discoideum (Social amoeba) protein is ATP-dependent RNA helicase ddx54 (helA).